The chain runs to 199 residues: Guanylate kinase (199 aa).

One can recognise a Guanylate kinase-like domain in the interval 19–198; that stretch reads VTVAVVSGPT…AVAHLVELLS (180 aa). Residue 26 to 33 coordinates ATP; that stretch reads GPTAVGKG.

It belongs to the guanylate kinase family.

Its subcellular location is the cytoplasm. It carries out the reaction GMP + ATP = GDP + ADP. Its function is as follows. Essential for recycling GMP and indirectly, cGMP. The sequence is that of Guanylate kinase from Cutibacterium acnes (strain DSM 16379 / KPA171202) (Propionibacterium acnes).